The sequence spans 515 residues: Maturase K (515 aa).

The protein belongs to the intron maturase 2 family. MatK subfamily.

It localises to the plastid. Its subcellular location is the chloroplast. Usually encoded in the trnK tRNA gene intron. Probably assists in splicing its own and other chloroplast group II introns. The sequence is that of Maturase K from Picea pungens (Colorado spruce).